Here is a 62-residue protein sequence, read N- to C-terminus: DNA-directed RNA polymerase subunit Rpo10 (62 aa).

Zn(2+) contacts are provided by C6, C9, C43, and C44.

Belongs to the archaeal Rpo10/eukaryotic RPB10 RNA polymerase subunit family. In terms of assembly, part of the RNA polymerase complex. Requires Zn(2+) as cofactor.

It localises to the cytoplasm. The enzyme catalyses RNA(n) + a ribonucleoside 5'-triphosphate = RNA(n+1) + diphosphate. Its function is as follows. DNA-dependent RNA polymerase (RNAP) catalyzes the transcription of DNA into RNA using the four ribonucleoside triphosphates as substrates. This is DNA-directed RNA polymerase subunit Rpo10 from Methanoregula boonei (strain DSM 21154 / JCM 14090 / 6A8).